Reading from the N-terminus, the 258-residue chain is uncharacterized protein (258 aa).

3 Solcar repeats span residues 9–78 (KPIL…AKAR), 81–160 (PGVR…FKKK), and 165–246 (DHVF…VKSH). A run of 6 helical transmembrane segments spans residues 11-31 (ILVG…LSTI), 53-73 (GLSS…FVYE), 87-107 (LVSA…AEVV), 139-159 (MCGR…QFKK), 171-191 (PKGA…LDVI), and 218-239 (FEKG…YLGT).

This sequence belongs to the mitochondrial carrier (TC 2.A.29) family.

The protein localises to the mitochondrion inner membrane. This is an uncharacterized protein from Schizosaccharomyces pombe (strain 972 / ATCC 24843) (Fission yeast).